Consider the following 215-residue polypeptide: BAG family molecular chaperone regulator 5, mitochondrial (215 aa).

The N-terminal 14 residues, 1–14 (MKRSRKFSSSTTTT), are a transit peptide targeting the mitochondrion. The region spanning 50-79 (ATAAAARIQSGYRSYRIRNLYKKISSINRE) is the IQ domain. Residues 72 to 149 (KISSINREAN…GMQEILDSIS (78 aa)) form the BAG domain.

As to quaternary structure, binds to the ATPase domain of HSP70/HSC70 chaperones. Interacts with HSP70-1.

The protein resides in the mitochondrion. Functionally, co-chaperone that regulates diverse cellular pathways, such as programmed cell death and stress responses. This chain is BAG family molecular chaperone regulator 5, mitochondrial (BAG5), found in Arabidopsis thaliana (Mouse-ear cress).